The following is a 68-amino-acid chain: Large ribosomal subunit protein bL35 (68 aa).

It belongs to the bacterial ribosomal protein bL35 family.

The protein is Large ribosomal subunit protein bL35 of Rickettsia felis (strain ATCC VR-1525 / URRWXCal2) (Rickettsia azadi).